Consider the following 276-residue polypeptide: MEKVYGLIGFPVEHSLSPLMHNDAFARLGIPARYHLFSVEPGQVGAAIAGVRALGIAGVNVTIPHKLAVIPFLDEVDEHARRIGAVNTIINNDGRLVGYNTDGLGYVQALEEEMNITLDGKRILVIGAGGGARGIYFSLLSTAAERIDMANRTVEKAERLVREGDERRSAYFSLAEAETRLAEYDIIINTTSVGMHPRVEVQPLSLERLRPGVIVSDIIYNPLETKWLKEAKARGARVQNGVGMLVYQGALAFEKWTGQWPDVNRMKQLVIEALRR.

Shikimate contacts are provided by residues 15-17 (SLS) and Thr62. The active-site Proton acceptor is Lys66. An NADP(+)-binding site is contributed by Glu78. Asn87 and Asp102 together coordinate shikimate. NADP(+) is bound by residues 151 to 156 (NRTVEK) and Ile218. Tyr220 serves as a coordination point for shikimate. Gly241 serves as a coordination point for NADP(+).

It belongs to the shikimate dehydrogenase family. Homodimer.

The catalysed reaction is shikimate + NADP(+) = 3-dehydroshikimate + NADPH + H(+). It participates in metabolic intermediate biosynthesis; chorismate biosynthesis; chorismate from D-erythrose 4-phosphate and phosphoenolpyruvate: step 4/7. Functionally, involved in the biosynthesis of the chorismate, which leads to the biosynthesis of aromatic amino acids. Catalyzes the reversible NADPH linked reduction of 3-dehydroshikimate (DHSA) to yield shikimate (SA). The sequence is that of Shikimate dehydrogenase (NADP(+)) from Geobacillus kaustophilus (strain HTA426).